The chain runs to 336 residues: 4-hydroxy-2-oxovalerate aldolase (336 aa).

In terms of domain architecture, Pyruvate carboxyltransferase spans 5–255 (IRIIDSTLRD…ETGVDLYKIM (251 aa)). Residue 13 to 14 (RD) participates in substrate binding. Residue Asp-14 participates in Mn(2+) binding. His-17 serves as the catalytic Proton acceptor. Residues Ser-167 and His-194 each coordinate substrate. 2 residues coordinate Mn(2+): His-194 and His-196. Tyr-285 is a substrate binding site.

Belongs to the 4-hydroxy-2-oxovalerate aldolase family.

It catalyses the reaction (S)-4-hydroxy-2-oxopentanoate = acetaldehyde + pyruvate. In Carboxydothermus hydrogenoformans (strain ATCC BAA-161 / DSM 6008 / Z-2901), this protein is 4-hydroxy-2-oxovalerate aldolase (mhpE).